Reading from the N-terminus, the 153-residue chain is Cytochrome c-type biogenesis protein CcmE (153 aa).

Topologically, residues 1 to 8 (MTPVQRRR) are cytoplasmic. Residues 9 to 29 (LAWVLLALLASGLATALVAMA) traverse the membrane as a helical; Signal-anchor for type II membrane protein segment. The Extracellular portion of the chain corresponds to 30–153 (LERNIAYLYT…DVPVTAPEVR (124 aa)). Heme is bound by residues H123 and Y127.

It belongs to the CcmE/CycJ family.

Its subcellular location is the cell membrane. Heme chaperone required for the biogenesis of c-type cytochromes. Transiently binds heme delivered by CcmC and transfers the heme to apo-cytochromes in a process facilitated by CcmF and CcmH. The chain is Cytochrome c-type biogenesis protein CcmE from Stenotrophomonas maltophilia (strain K279a).